The sequence spans 122 residues: Large ribosomal subunit protein uL18 (122 aa).

It belongs to the universal ribosomal protein uL18 family. Part of the 50S ribosomal subunit; part of the 5S rRNA/L5/L18/L25 subcomplex. Contacts the 5S and 23S rRNAs.

Its function is as follows. This is one of the proteins that bind and probably mediate the attachment of the 5S RNA into the large ribosomal subunit, where it forms part of the central protuberance. The sequence is that of Large ribosomal subunit protein uL18 from Acetivibrio thermocellus (strain ATCC 27405 / DSM 1237 / JCM 9322 / NBRC 103400 / NCIMB 10682 / NRRL B-4536 / VPI 7372) (Clostridium thermocellum).